Here is a 216-residue protein sequence, read N- to C-terminus: Probable transaldolase (216 aa).

The active-site Schiff-base intermediate with substrate is the K83.

This sequence belongs to the transaldolase family. Type 3B subfamily.

Its subcellular location is the cytoplasm. The catalysed reaction is D-sedoheptulose 7-phosphate + D-glyceraldehyde 3-phosphate = D-erythrose 4-phosphate + beta-D-fructose 6-phosphate. It participates in carbohydrate degradation; pentose phosphate pathway; D-glyceraldehyde 3-phosphate and beta-D-fructose 6-phosphate from D-ribose 5-phosphate and D-xylulose 5-phosphate (non-oxidative stage): step 2/3. Functionally, transaldolase is important for the balance of metabolites in the pentose-phosphate pathway. This Clostridioides difficile (strain 630) (Peptoclostridium difficile) protein is Probable transaldolase.